The chain runs to 492 residues: 2-succinylbenzoate--CoA ligase (492 aa).

This sequence belongs to the ATP-dependent AMP-binding enzyme family. MenE subfamily.

It carries out the reaction 2-succinylbenzoate + ATP + CoA = 2-succinylbenzoyl-CoA + AMP + diphosphate. It functions in the pathway quinol/quinone metabolism; 1,4-dihydroxy-2-naphthoate biosynthesis; 1,4-dihydroxy-2-naphthoate from chorismate: step 5/7. Its pathway is quinol/quinone metabolism; menaquinone biosynthesis. Its function is as follows. Converts 2-succinylbenzoate (OSB) to 2-succinylbenzoyl-CoA (OSB-CoA). The protein is 2-succinylbenzoate--CoA ligase of Staphylococcus aureus (strain bovine RF122 / ET3-1).